Here is a 236-residue protein sequence, read N- to C-terminus: CDP-diacylglycerol--glycerol-3-phosphate 3-phosphatidyltransferase (236 aa).

Helical transmembrane passes span 39–59, 66–86, 120–140, 163–183, and 196–216; these read IFIA…GVLA, ISIS…TAVI, VLIA…VFIV, WLGK…CFVW, and GLFF…FSIW.

This sequence belongs to the CDP-alcohol phosphatidyltransferase class-I family.

It is found in the cell membrane. The catalysed reaction is a CDP-1,2-diacyl-sn-glycerol + sn-glycerol 3-phosphate = a 1,2-diacyl-sn-glycero-3-phospho-(1'-sn-glycero-3'-phosphate) + CMP + H(+). The protein operates within phospholipid metabolism; phosphatidylglycerol biosynthesis; phosphatidylglycerol from CDP-diacylglycerol: step 1/2. Functionally, this protein catalyzes the committed step to the synthesis of the acidic phospholipids. The chain is CDP-diacylglycerol--glycerol-3-phosphate 3-phosphatidyltransferase (pgsA) from Mycoplasma genitalium (strain ATCC 33530 / DSM 19775 / NCTC 10195 / G37) (Mycoplasmoides genitalium).